The following is a 298-amino-acid chain: GTP cyclohydrolase FolE2 (298 aa).

Belongs to the GTP cyclohydrolase IV family.

It catalyses the reaction GTP + H2O = 7,8-dihydroneopterin 3'-triphosphate + formate + H(+). Its pathway is cofactor biosynthesis; 7,8-dihydroneopterin triphosphate biosynthesis; 7,8-dihydroneopterin triphosphate from GTP: step 1/1. In terms of biological role, converts GTP to 7,8-dihydroneopterin triphosphate. The protein is GTP cyclohydrolase FolE2 of Pseudomonas fluorescens (strain SBW25).